Consider the following 390-residue polypeptide: uncharacterized protein (390 aa).

A run of 11 helical transmembrane segments spans residues 10-30 (LSFCVIFLLRMLGMFMILPIL), 43-63 (FLIGLSMGIYGISQVIFQIPF), 81-101 (FMFFIGNIISASIHSIWGLII), 134-154 (AIGVSFAISFLIAVVSGPIIV), 162-182 (IFWISAFLSIVCMIIVCFFVP), 213-233 (FYLGVFFLHFLLMIKFTMIPN), 246-266 (WKVYLGTILISFFVLFLFIFY), 272-292 (ILENIIEICILFILFSEIIFL), 298-318 (LLFLIISLQIFFISFNFLEVF), 341-361 (TSQFLGIFFGGVFSGWLYSFL), and 363-383 (FSQIFYFELFIILLWLIFSFF).

This sequence belongs to the major facilitator superfamily.

It localises to the cell membrane. This is an uncharacterized protein from Buchnera aphidicola subsp. Acyrthosiphon pisum (strain APS) (Acyrthosiphon pisum symbiotic bacterium).